The primary structure comprises 1007 residues: Probable beta-galactosidase A (1007 aa).

Residues 1–18 (MRLLPVWTAALLAAQAAG) form the signal peptide. The substrate site is built by Tyr96, Asn140, Ala141, and Glu142. Residue Asn156 is glycosylated (N-linked (GlcNAc...) asparagine). Substrate is bound at residue Asn199. Glu200 (proton donor) is an active-site residue. The cysteines at positions 205 and 206 are disulfide-linked. Tyr260 is a binding site for substrate. The cysteines at positions 266 and 315 are disulfide-linked. Glu298 (nucleophile) is an active-site residue. Tyr364 is a substrate binding site. Asn405, Asn422, Asn621, Asn740, Asn775, and Asn914 each carry an N-linked (GlcNAc...) asparagine glycan.

Belongs to the glycosyl hydrolase 35 family.

Its subcellular location is the secreted. The enzyme catalyses Hydrolysis of terminal non-reducing beta-D-galactose residues in beta-D-galactosides.. Functionally, cleaves beta-linked terminal galactosyl residues from gangliosides, glycoproteins, and glycosaminoglycans. The sequence is that of Probable beta-galactosidase A (lacA) from Emericella nidulans (strain FGSC A4 / ATCC 38163 / CBS 112.46 / NRRL 194 / M139) (Aspergillus nidulans).